We begin with the raw amino-acid sequence, 353 residues long: AA9 family lytic polysaccharide monooxygenase A (353 aa).

Residues 1-19 form the signal peptide; the sequence is MKSTFGLLALAAAAKMAHA. Cu(2+) is bound by residues histidine 20 and histidine 102. A disulfide bridge links cysteine 62 with cysteine 183. Residue histidine 169 participates in O2 binding. Cu(2+) is bound at residue tyrosine 180. Positions 266 to 276 are enriched in low complexity; it reads KPTTTTAAAPA. The tract at residues 266–316 is disordered; it reads KPTTTTAAAPAETDSCDGDDDDYETETPAPQASATQAPAPQRPAPQTPSGS. Residues 279–290 show a composition bias toward acidic residues; sequence DSCDGDDDDYET. The segment covering 291 to 304 has biased composition (low complexity); it reads ETPAPQASATQAPA. Residues 315–351 enclose the CBM1 domain; sequence GSVKEWYQCGGINYTGAKNCESGLVCKEWNPYYHQCI. A glycan (N-linked (GlcNAc...) asparagine) is linked at asparagine 327.

The protein belongs to the polysaccharide monooxygenase AA9 family. Requires Cu(2+) as cofactor.

The protein resides in the secreted. It catalyses the reaction [(1-&gt;4)-beta-D-glucosyl]n+m + reduced acceptor + O2 = 4-dehydro-beta-D-glucosyl-[(1-&gt;4)-beta-D-glucosyl]n-1 + [(1-&gt;4)-beta-D-glucosyl]m + acceptor + H2O.. Its function is as follows. Lytic polysaccharide monooxygenase (LPMO) that depolymerizes crystalline and amorphous polysaccharides via the oxidation of scissile alpha- or beta-(1-4)-glycosidic bonds, yielding C4 oxidation products. Catalysis by LPMOs requires the reduction of the active-site copper from Cu(II) to Cu(I) by a reducing agent and H(2)O(2) or O(2) as a cosubstrate. The protein is AA9 family lytic polysaccharide monooxygenase A (eglD) of Aspergillus clavatus (strain ATCC 1007 / CBS 513.65 / DSM 816 / NCTC 3887 / NRRL 1 / QM 1276 / 107).